A 352-amino-acid polypeptide reads, in one-letter code: MQTPSIIQCGLLNSFARKMTDAISDNQIIATSRFFNIARDVADVVVSNTKLAQQYEQLSIDSLKEYLVSVAKFVAVDYSNTTSADVDDLIHKLRLFIEEECYQYNIDKEETCDGDVCVSDEYNEPAPKPKPKPKPKPAPKPKPAPKPKPAPKPAPKPAPKPAPKPAPKPAPKPAPKPAPEPAPEPAPEPAPKPAPEPAPEPAPIRPARRCDENPSNLETCCTNKALYGDFTDSSCDIVKKKTNWWLWGGIAILVIVLMIGGYFIYKRYFSAPKFENTGEFVNDMNFNNDVNFNNDVNFDNDMNYGNEGIDVSDLEILNLPVPSVSPVPSASIVPSVSPIPRGSPVPSASPIK.

Residues 122–214 (YNEPAPKPKP…RPARRCDENP (93 aa)) form a disordered region. Over residues 129–145 (PKPKPKPKPAPKPKPAP) the composition is skewed to basic residues. Pro residues predominate over residues 146–204 (KPKPAPKPAPKPAPKPAPKPAPKPAPKPAPKPAPEPAPEPAPEPAPKPAPEPAPEPAPI). The interval 244-264 (WWLWGGIAILVIVLMIGGYFI) is hydrophobic.

As to quaternary structure, interacts with the major capsid protein.

It is found in the virion. One of the minor capsid proteins that constitute a network internal to the major capsid proteins and outside the lipid membrane. The minor capsid protein P14 does not serve a cross-linking function between neighboring capsomers, it may play a role in the viral capsid assembly. The chain is Minor capsid protein P14 from Chlorella (PBCV-1).